Reading from the N-terminus, the 160-residue chain is Epithelial membrane protein 1 (160 aa).

Residues Met1–Val21 form a helical membrane-spanning segment. 2 N-linked (GlcNAc...) asparagine glycosylation sites follow: Asn35 and Asn43. 2 consecutive transmembrane segments (helical) span residues Phe67 to Phe87 and Phe95 to Ile115. The N-linked (GlcNAc...) asparagine glycan is linked to Asn128. Residues Phe137 to Leu157 traverse the membrane as a helical segment.

The protein belongs to the PMP-22/EMP/MP20 family.

It localises to the membrane. In Mus musculus (Mouse), this protein is Epithelial membrane protein 1 (Emp1).